Reading from the N-terminus, the 708-residue chain is MRVSVSLVLGVGLGCSSPALWAETESPAELEVLTVTAEAERAEGPVQGYRANRTASATRTDTRIEDIPQAISVVPRQVLDDLDSARIERALDFAGGVSRQNNFGGLTMFEYNVRGFTTSEFYRDGFSANRGYMNAPDSATIERVEILKGPASSLYGRGDPGGTVNLVTKKPQAERFARLHASAGSWDRYRSTLDLNTPLDEEGDLLYRMNLAVEDSKGFRDYADGQRLLVAPSISWQLDPDTSLLVEAEVVRNRQVFDRGTVAPHNHLGSLPRSRFFGEPDDGKIDNNNETLQATLRHHFNEQWSLRLASHYKHGHLDGYASENSSLAADGYSLRREYRYRDFEWHDSITQLDLLGDLHTGSIRHQLLMGLEYERYHNDELILRSIPSRNPYAIDIRRPVYGQPKPPFGRDDRNHEEVDAMALNLQDQIEFSEKWRGLLGVRFDRYRQDMNATRLNNGRFRETSSQQTQRAATPRIGVLYQATPEVGLFANASKSFKPNGGTDMAGKAFDPEEGRGYEAGVKLDLLDGRLGMTLAAFHLKKKNVLTADPSNPGYQQTAGEARSQGFDLQFSGQLTEQLRLIGAYAYIDAEVTKDENIARGSRLLNVPKHSGSLMGVYEFREGWLHGADAGAAVNYVGERAGDSSDSGFELPAYTTVDLLARYPLASNATLGVNVNNLFDRRYYERSYNNVWVAPGEPRNLTMSLTLNY.

A signal peptide spans 1–21; that stretch reads MRVSVSLVLGVGLGCSSPALW. The TBDR plug domain maps to 63–169; the sequence is RIEDIPQAIS…PGGTVNLVTK (107 aa). One can recognise a TBDR beta-barrel domain in the interval 174-708; the sequence is ERFARLHASA…NLTMSLTLNY (535 aa).

It belongs to the TonB-dependent receptor family.

Its subcellular location is the cell outer membrane. Its function is as follows. Transports the metallophore pseudopaline, which is involved in the acquisition of nickel and zinc, and thus enables bacterial growth inside the host, where metal access is limited. Is probably involved in the import of pseudopaline-metal complexes. The sequence is that of Metal-pseudopaline receptor CntO from Pseudomonas aeruginosa (strain ATCC 15692 / DSM 22644 / CIP 104116 / JCM 14847 / LMG 12228 / 1C / PRS 101 / PAO1).